The chain runs to 63 residues: Large ribosomal subunit protein uL30 (63 aa).

It belongs to the universal ribosomal protein uL30 family. As to quaternary structure, part of the 50S ribosomal subunit.

This is Large ribosomal subunit protein uL30 from Rhodospirillum rubrum (strain ATCC 11170 / ATH 1.1.1 / DSM 467 / LMG 4362 / NCIMB 8255 / S1).